The following is a 240-amino-acid chain: Ribonuclease PH (240 aa).

Phosphate-binding positions include R87 and 125 to 127 (GTR).

The protein belongs to the RNase PH family. As to quaternary structure, homohexameric ring arranged as a trimer of dimers.

The catalysed reaction is tRNA(n+1) + phosphate = tRNA(n) + a ribonucleoside 5'-diphosphate. Functionally, phosphorolytic 3'-5' exoribonuclease that plays an important role in tRNA 3'-end maturation. Removes nucleotide residues following the 3'-CCA terminus of tRNAs; can also add nucleotides to the ends of RNA molecules by using nucleoside diphosphates as substrates, but this may not be physiologically important. Probably plays a role in initiation of 16S rRNA degradation (leading to ribosome degradation) during starvation. This Pseudomonas putida (strain GB-1) protein is Ribonuclease PH.